Consider the following 177-residue polypeptide: MSRVAKAPVVIPAGVEVKLNGQVISIKGKNGELTRTINDAVEIKHADNALTFGPRDGFVDGWAQAGTARALLNSMVIGVTEGFTKKLQLVGVGYRAAVKGNVVNLALGFSHPVDHELPAGITAECPSQTEIVLKGADKQLIGQVAADLRAYRRPEPYKGKGVRYADEVVRTKEAKKK.

This sequence belongs to the universal ribosomal protein uL6 family. Part of the 50S ribosomal subunit.

Functionally, this protein binds to the 23S rRNA, and is important in its secondary structure. It is located near the subunit interface in the base of the L7/L12 stalk, and near the tRNA binding site of the peptidyltransferase center. The sequence is that of Large ribosomal subunit protein uL6 from Edwardsiella ictaluri (strain 93-146).